The sequence spans 375 residues: Secreted LysM effector Vd4LysM (375 aa).

The N-terminal stretch at 1–24 is a signal peptide; sequence MPSVTISSTMLAGLLLMLVPASSA. Residues 57–104 form the LysM 1 domain; the sequence is SWWWDNEGQIPCANMPAEWGITMQDFLRWNPSITSSCGNFLNGRSYCV. A disordered region spans residues 108–139; sequence GEEPPVPGTPTTTTAPATTTKPSNGITTPQPI. The span at 116 to 129 shows a compositional bias: low complexity; the sequence is TPTTTTAPATTTKP. The LysM 2 domain occupies 149–195; sequence KFHYISEGDRCQDILSYQKITLADFFKWNPAVKSDCSGLWSKTNACV. The segment covering 206-217 has biased composition (low complexity); sequence TTTTKPATPTTP. Residues 206–225 are disordered; it reads TTTTKPATPTTPSNGITTPQ. The LysM 3 domain maps to 237–283; it reads KFHYISEGDRCQDILSYQKITQADFFKWNPAVKSDCSGLWSKTHACV. The segment at 287–317 is disordered; sequence GGQAPPPTPTTTKPTTTKPPGNGVTTPTPTQ. Residues 296–317 show a composition bias toward low complexity; the sequence is TTTKPTTTKPPGNGVTTPTPTQ. One can recognise a LysM 4 domain in the interval 326–372; the sequence is KFHFVSPGNTCQQIVSYQKITMANFVKWNSGAGSGCNNLWGNTHACV.

Belongs to the secreted LysM effector family.

Functionally, might have a role in sequestration of chitin oligosaccharides (breakdown products of fungal cell walls that are released during invasion and act as triggers of host immunity) to dampen host defense. Does not play an important role during host colonization. This chain is Secreted LysM effector Vd4LysM, found in Verticillium dahliae (strain VdLs.17 / ATCC MYA-4575 / FGSC 10137) (Verticillium wilt).